Reading from the N-terminus, the 337-residue chain is Viral cathepsin (337 aa).

The N-terminal stretch at 1–16 (MNKILILLLLVSAVLT) is a signal peptide. Residues 17–126 (SHDQVVAVTI…VVDGPGQRQR (110 aa)) constitute a propeptide, activation peptide. Intrachain disulfides connect Cys-147–Cys-188, Cys-181–Cys-221, and Cys-276–Cys-324. The active site involves Cys-150. Active-site residues include His-283 and Asn-303.

The protein belongs to the peptidase C1 family. Synthesized as an inactive proenzyme and activated by proteolytic removal of the inhibitory propeptide.

The enzyme catalyses Endopeptidase of broad specificity, hydrolyzing substrates of both cathepsin L and cathepsin B.. Its function is as follows. Cysteine protease that plays an essential role in host liquefaction to facilitate horizontal transmission of the virus. May participate in the degradation of foreign protein expressed by the baculovirus system. The protein is Viral cathepsin (VCATH) of Mamestra configurata (bertha armyworm).